We begin with the raw amino-acid sequence, 309 residues long: MIIFSGGTGTPKLLDGLKEILPAEEMTVVVNTAEDLWVSGNLICPDLDTVIYLFSDQIDRNRWWGVKDDTFLTYERMQKLGVMESMKLGDCDRATHIIRSNFIRSGISLTDAILELASIFGIDAKILPMSDDPVSTYIEAPEAILHFQDFWIGKHGEPEVLGVDITGISEASISPKVLEALENDDNVLIGPSNPITSIGPIISLPGMKDLLKKKKVVAVSPIIGNAPVSGPAGKLMKACGLEVSSMGVAEYYQDFLDIFVFDERDQADEFAFEKLGCRASRADTLMTSTEKSKELAELVVGLFDTIVCP.

Residues Asp-48 and Lys-87 each contribute to the 7,8-didemethyl-8-hydroxy-5-deazariboflavin site.

Belongs to the CofD family. As to quaternary structure, homodimer. Mg(2+) serves as cofactor.

The enzyme catalyses (2S)-lactyl-2-diphospho-5'-guanosine + 7,8-didemethyl-8-hydroxy-5-deazariboflavin = oxidized coenzyme F420-0 + GMP + H(+). It participates in cofactor biosynthesis; coenzyme F420 biosynthesis. Its function is as follows. Catalyzes the transfer of the 2-phospholactate moiety from (2S)-lactyl-2-diphospho-5'-guanosine to 7,8-didemethyl-8-hydroxy-5-deazariboflavin (FO) with the formation of oxidized coenzyme F420-0 and GMP. The chain is 2-phospho-L-lactate transferase from Methanosarcina barkeri (strain Fusaro / DSM 804).